Consider the following 124-residue polypeptide: Small ribosomal subunit protein bS6 (124 aa).

The disordered stretch occupies residues 97 to 124; that stretch reads EQGPSAMMRRGDRDRSNRSDRRRDRDAA. Residues 105–124 show a composition bias toward basic and acidic residues; sequence RRGDRDRSNRSDRRRDRDAA.

It belongs to the bacterial ribosomal protein bS6 family.

Its function is as follows. Binds together with bS18 to 16S ribosomal RNA. This chain is Small ribosomal subunit protein bS6, found in Zymomonas mobilis subsp. mobilis (strain ATCC 31821 / ZM4 / CP4).